The primary structure comprises 441 residues: Arginine biosynthesis bifunctional protein ArgJ, mitochondrial (441 aa).

Substrate-binding residues include Thr177, Lys203, Thr214, Glu303, Asn436, and Ser441. Residue Thr214 is the Nucleophile of the active site.

This sequence belongs to the ArgJ family. As to quaternary structure, heterodimer of an alpha and a beta chain. The alpha and beta chains are autoproteolytically processed from a single precursor protein within the mitochondrion.

The protein resides in the mitochondrion matrix. The enzyme catalyses N(2)-acetyl-L-ornithine + L-glutamate = N-acetyl-L-glutamate + L-ornithine. It catalyses the reaction L-glutamate + acetyl-CoA = N-acetyl-L-glutamate + CoA + H(+). It functions in the pathway amino-acid biosynthesis; L-arginine biosynthesis; L-ornithine and N-acetyl-L-glutamate from L-glutamate and N(2)-acetyl-L-ornithine (cyclic): step 1/1. The protein operates within amino-acid biosynthesis; L-arginine biosynthesis; N(2)-acetyl-L-ornithine from L-glutamate: step 1/4. In terms of biological role, catalyzes two activities which are involved in the cyclic version of arginine biosynthesis: the synthesis of acetylglutamate from glutamate and acetyl-CoA, and of ornithine by transacetylation between acetylornithine and glutamate. This chain is Arginine biosynthesis bifunctional protein ArgJ, mitochondrial, found in Debaryomyces hansenii (strain ATCC 36239 / CBS 767 / BCRC 21394 / JCM 1990 / NBRC 0083 / IGC 2968) (Yeast).